The primary structure comprises 89 residues: Small ribosomal subunit protein uS14 (89 aa).

A disordered region spans residues 32–51; sequence DYEGLQKLPKNSSPVRLHNR.

The protein belongs to the universal ribosomal protein uS14 family. Part of the 30S ribosomal subunit. Contacts proteins S3 and S10.

Functionally, binds 16S rRNA, required for the assembly of 30S particles and may also be responsible for determining the conformation of the 16S rRNA at the A site. This chain is Small ribosomal subunit protein uS14, found in Christiangramia forsetii (strain DSM 17595 / CGMCC 1.15422 / KT0803) (Gramella forsetii).